We begin with the raw amino-acid sequence, 352 residues long: Protein RecA (352 aa).

ATP is bound at residue 68-75; that stretch reads GPESSGKT.

This sequence belongs to the RecA family.

The protein localises to the cytoplasm. In terms of biological role, can catalyze the hydrolysis of ATP in the presence of single-stranded DNA, the ATP-dependent uptake of single-stranded DNA by duplex DNA, and the ATP-dependent hybridization of homologous single-stranded DNAs. It interacts with LexA causing its activation and leading to its autocatalytic cleavage. In Clostridium perfringens (strain ATCC 13124 / DSM 756 / JCM 1290 / NCIMB 6125 / NCTC 8237 / Type A), this protein is Protein RecA.